A 318-amino-acid polypeptide reads, in one-letter code: Acetyl-coenzyme A carboxylase carboxyl transferase subunit alpha (318 aa).

Residues 38 to 292 (KLEKRLAKLE…NKTITKSLHA (255 aa)) form the CoA carboxyltransferase C-terminal domain.

It belongs to the AccA family. Acetyl-CoA carboxylase is a heterohexamer composed of biotin carboxyl carrier protein (AccB), biotin carboxylase (AccC) and two subunits each of ACCase subunit alpha (AccA) and ACCase subunit beta (AccD).

The protein resides in the cytoplasm. It catalyses the reaction N(6)-carboxybiotinyl-L-lysyl-[protein] + acetyl-CoA = N(6)-biotinyl-L-lysyl-[protein] + malonyl-CoA. The protein operates within lipid metabolism; malonyl-CoA biosynthesis; malonyl-CoA from acetyl-CoA: step 1/1. In terms of biological role, component of the acetyl coenzyme A carboxylase (ACC) complex. First, biotin carboxylase catalyzes the carboxylation of biotin on its carrier protein (BCCP) and then the CO(2) group is transferred by the carboxyltransferase to acetyl-CoA to form malonyl-CoA. This Listeria monocytogenes serovar 1/2a (strain ATCC BAA-679 / EGD-e) protein is Acetyl-coenzyme A carboxylase carboxyl transferase subunit alpha.